Consider the following 33-residue polypeptide: Lysozyme C, spleen isozyme (33 aa).

The protein belongs to the glycosyl hydrolase 22 family. In terms of assembly, monomer.

It carries out the reaction Hydrolysis of (1-&gt;4)-beta-linkages between N-acetylmuramic acid and N-acetyl-D-glucosamine residues in a peptidoglycan and between N-acetyl-D-glucosamine residues in chitodextrins.. Its function is as follows. Lysozymes have primarily a bacteriolytic function; those in tissues and body fluids are associated with the monocyte-macrophage system and enhance the activity of immunoagents. In Equus caballus (Horse), this protein is Lysozyme C, spleen isozyme.